The chain runs to 54 residues: Conotoxin vc5a (54 aa).

The signal sequence occupies residues 1 to 14 (VILLLITSTPSVDA). Residues 15–42 (RLKAKDNMPLASFHDNAKRTLQTRLINT) constitute a propeptide that is removed on maturation. The residue at position 49 (proline 49) is a 4-hydroxyproline. Position 53 is an isoleucine amide (isoleucine 53).

The protein belongs to the conotoxin T superfamily. Post-translationally, contains 2 disulfide bonds that can be either 'C1-C3, C2-C4' or 'C1-C4, C2-C3', since these disulfide connectivities have been observed for conotoxins with cysteine framework V (for examples, see AC P0DQQ7 and AC P81755). As to expression, expressed by the venom duct.

Its subcellular location is the secreted. The polypeptide is Conotoxin vc5a (Conus victoriae (Queen Victoria cone)).